Consider the following 990-residue polypeptide: Glycine dehydrogenase (decarboxylating) (990 aa).

K726 is subject to N6-(pyridoxal phosphate)lysine.

Belongs to the GcvP family. In terms of assembly, the glycine cleavage system is composed of four proteins: P, T, L and H. Requires pyridoxal 5'-phosphate as cofactor.

It catalyses the reaction N(6)-[(R)-lipoyl]-L-lysyl-[glycine-cleavage complex H protein] + glycine + H(+) = N(6)-[(R)-S(8)-aminomethyldihydrolipoyl]-L-lysyl-[glycine-cleavage complex H protein] + CO2. In terms of biological role, the glycine cleavage system catalyzes the degradation of glycine. The P protein binds the alpha-amino group of glycine through its pyridoxal phosphate cofactor; CO(2) is released and the remaining methylamine moiety is then transferred to the lipoamide cofactor of the H protein. The chain is Glycine dehydrogenase (decarboxylating) from Rhodopseudomonas palustris (strain ATCC BAA-98 / CGA009).